The chain runs to 84 residues: MNISRMEQRVLHVLAQGGYIRHQREDGHICEIECFTREGYLLSDCTMAVFQQLRRKRLIESRMGSPYRISFKGRENVRAQLNNR.

The protein belongs to the UPF0386 family.

In Brucella anthropi (strain ATCC 49188 / DSM 6882 / CCUG 24695 / JCM 21032 / LMG 3331 / NBRC 15819 / NCTC 12168 / Alc 37) (Ochrobactrum anthropi), this protein is UPF0386 protein Oant_1614.